The following is a 407-amino-acid chain: Cell division protein FtsZ (407 aa).

GTP is bound by residues 18–22, 105–107, Glu-136, Arg-140, and Asp-184; these read GGGVN and GTG. Positions 312–407 are disordered; the sequence is FDGGQPPARR…EELDVPDFLK (96 aa). Composition is skewed to low complexity over residues 336–348 and 368–377; these read AAPARSSAESTRP and APATASGESS. A compositionally biased stretch (pro residues) spans 381 to 390; it reads VSPPHVPPAR. The span at 396 to 407 shows a compositional bias: acidic residues; that stretch reads QAEELDVPDFLK.

It belongs to the FtsZ family. In terms of assembly, homodimer. Polymerizes to form a dynamic ring structure in a strictly GTP-dependent manner. Interacts directly with several other division proteins.

It localises to the cytoplasm. In terms of biological role, essential cell division protein that forms a contractile ring structure (Z ring) at the future cell division site. The regulation of the ring assembly controls the timing and the location of cell division. One of the functions of the FtsZ ring is to recruit other cell division proteins to the septum to produce a new cell wall between the dividing cells. Binds GTP and shows GTPase activity. The polypeptide is Cell division protein FtsZ (Streptomyces griseus).